Here is a 493-residue protein sequence, read N- to C-terminus: Galactose-1-phosphate uridylyltransferase (493 aa).

This sequence belongs to the galactose-1-phosphate uridylyltransferase type 2 family.

It is found in the cytoplasm. The enzyme catalyses alpha-D-galactose 1-phosphate + UDP-alpha-D-glucose = alpha-D-glucose 1-phosphate + UDP-alpha-D-galactose. The protein operates within carbohydrate metabolism; galactose metabolism. This chain is Galactose-1-phosphate uridylyltransferase, found in Streptococcus pneumoniae (strain CGSP14).